Reading from the N-terminus, the 91-residue chain is DNA-directed RNA polymerase subunit omega (91 aa).

It belongs to the RNA polymerase subunit omega family. As to quaternary structure, the RNAP catalytic core consists of 2 alpha, 1 beta, 1 beta' and 1 omega subunit. When a sigma factor is associated with the core the holoenzyme is formed, which can initiate transcription.

The catalysed reaction is RNA(n) + a ribonucleoside 5'-triphosphate = RNA(n+1) + diphosphate. Promotes RNA polymerase assembly. Latches the N- and C-terminal regions of the beta' subunit thereby facilitating its interaction with the beta and alpha subunits. The sequence is that of DNA-directed RNA polymerase subunit omega from Psychromonas ingrahamii (strain DSM 17664 / CCUG 51855 / 37).